We begin with the raw amino-acid sequence, 89 residues long: uncharacterized protein (89 aa).

Basic residues-rich tracts occupy residues 1-17 (MPPH…HGHH) and 65-89 (HHGH…HGHH). Disordered regions lie at residues 1-25 (MPPH…ITPV) and 60-89 (LETG…HGHH).

This is an uncharacterized protein from Dictyostelium discoideum (Social amoeba).